The sequence spans 216 residues: Maleylacetoacetate isomerase (216 aa).

Met1 carries the N-acetylmethionine modification. Residues 4 to 87 form the GST N-terminal domain; that stretch reads GKPVLYSYFR…YLEETRPIPR (84 aa). Glutathione contacts are provided by residues 14–19 and Gln45; that span reads SSCSWR. Lys57 carries the N6-succinyllysine modification. Residues Val59, 71 to 72, Gln111, and 115 to 117 each bind glutathione; these read QS and NLS. A GST C-terminal domain is found at 92–212; sequence DPQKRAIVRM…HPCRQPDTPA (121 aa). Position 136 is a phosphothreonine (Thr136). Ser137 is modified (phosphoserine). Lys177 bears the N6-succinyllysine mark. Ser181 bears the Phosphoserine mark.

This sequence belongs to the GST superfamily. Zeta family. As to quaternary structure, homodimer. Requires glutathione as cofactor. The N-terminus is blocked.

It is found in the cytoplasm. The catalysed reaction is 4-maleylacetoacetate = 4-fumarylacetoacetate. The enzyme catalyses RX + glutathione = an S-substituted glutathione + a halide anion + H(+). The protein operates within amino-acid degradation; L-phenylalanine degradation; acetoacetate and fumarate from L-phenylalanine: step 5/6. Probable bifunctional enzyme showing minimal glutathione-conjugating activity with ethacrynic acid and 7-chloro-4-nitrobenz-2-oxa-1, 3-diazole and maleylacetoacetate isomerase activity. Also has low glutathione peroxidase activity with t-butyl and cumene hydroperoxides. Is able to catalyze the glutathione dependent oxygenation of dichloroacetic acid to glyoxylic acid. The polypeptide is Maleylacetoacetate isomerase (Gstz1) (Rattus norvegicus (Rat)).